Consider the following 431-residue polypeptide: MGSPMASLVATLLVLTISLTFVSQSTANYFYSSPPPPVKHYTPPVKHYSPPPVYHSPPPPKKHYEYKSPPPPVKHYSPPPVYHSPPPPKKHYVYKSPPPPVKHYSPPPVYHSPPPPKKHYVYKSPPPPVKHYSPPPVYHSPPPPKKHYVYKSPPPPVKHYSPPPVYHSPPPPKKHYVYKSPPPPVKHYSPPPVYHSPPPPKKHYVYKSPPPPVKHYSPPPVYHSPPPPKKHYVYKSPPPPVKHYSPPPVYHSPPPPKKHYVYKSPPPPVKHYSPPPVYHSPPPPKKHYVYKSPPPPVKHYSPPPVYHSPPPPKKHYVYKSPPPPVKHYSPPPVYHSPPPPKKHYVYKSPPPPVKHYSPPPVYHSPPPPKKHYVYKSPPPPVKHYSPPPVYHSPPPPKEKYVYKSPPPPPVHHYSPPHHPYLYKSPPPPYHY.

The N-terminal stretch at 1-27 (MGSPMASLVATLLVLTISLTFVSQSTA) is a signal peptide. 3 consecutive repeat copies span residues 33–41 (SPPPPVKHY), 49–55 (SPPPVYH), and 56–63 (SPPPPKKH). Residues 33–384 (SPPPPVKHYT…KSPPPPVKHY (352 aa)) are 13 X 9 AA repeats of S-P-P-P-P-V-K-H-Y. The segment at 42–408 (TPPVKHYSPP…KYVYKSPPPP (367 aa)) is disordered. Residues 49 to 59 (SPPPVYHSPPP) are compositionally biased toward pro residues. Residues 49 to 391 (SPPPVYHSPP…KHYSPPPVYH (343 aa)) are 13 X 7 AA repeats of S-P-P-P-V-Y-H. The 12 X 8 AA repeats of S-P-P-P-P-K-K-H stretch occupies residues 56–371 (SPPPPKKHYE…YHSPPPPKKH (316 aa)). The tract at residues 64-67 (YEYK) is isodityrosine cross-linking. 3 tandem repeats follow at residues 68–76 (SPPPPVKHY), 77–83 (SPPPVYH), and 84–91 (SPPPPKKH). Residues 68 to 87 (SPPPPVKHYSPPPVYHSPPP) are compositionally biased toward pro residues. An isodityrosine cross-linking region spans residues 92–95 (YVYK). 3 repeat units span residues 96–104 (SPPPPVKHY), 105–111 (SPPPVYH), and 112–119 (SPPPPKKH). A compositionally biased stretch (pro residues) spans 96–115 (SPPPPVKHYSPPPVYHSPPP). Residues 120-123 (YVYK) are isodityrosine cross-linking. Repeat copies occupy residues 124 to 132 (SPPPPVKHY), 133 to 139 (SPPPVYH), and 140 to 147 (SPPPPKKH). Residues 124 to 143 (SPPPPVKHYSPPPVYHSPPP) are compositionally biased toward pro residues. An isodityrosine cross-linking region spans residues 148-151 (YVYK). 3 repeat units span residues 152 to 160 (SPPPPVKHY), 161 to 167 (SPPPVYH), and 168 to 175 (SPPPPKKH). A compositionally biased stretch (pro residues) spans 152 to 171 (SPPPPVKHYSPPPVYHSPPP). Residues 176-179 (YVYK) form an isodityrosine cross-linking region. A run of 3 repeats spans residues 180 to 188 (SPPPPVKHY), 189 to 195 (SPPPVYH), and 196 to 203 (SPPPPKKH). A compositionally biased stretch (pro residues) spans 180 to 199 (SPPPPVKHYSPPPVYHSPPP). The isodityrosine cross-linking stretch occupies residues 204-207 (YVYK). A run of 3 repeats spans residues 208 to 216 (SPPPPVKHY), 217 to 223 (SPPPVYH), and 224 to 231 (SPPPPKKH). Residues 208 to 227 (SPPPPVKHYSPPPVYHSPPP) show a composition bias toward pro residues. Positions 232-235 (YVYK) are isodityrosine cross-linking. 3 consecutive repeat copies span residues 236–244 (SPPPPVKHY), 245–251 (SPPPVYH), and 252–259 (SPPPPKKH). Residues 236–255 (SPPPPVKHYSPPPVYHSPPP) are compositionally biased toward pro residues. The segment at 260 to 263 (YVYK) is isodityrosine cross-linking. Tandem repeats lie at residues 264–272 (SPPPPVKHY), 273–279 (SPPPVYH), and 280–287 (SPPPPKKH). Pro residues predominate over residues 264-283 (SPPPPVKHYSPPPVYHSPPP). The isodityrosine cross-linking stretch occupies residues 288 to 291 (YVYK). Tandem repeats lie at residues 292-300 (SPPPPVKHY), 301-307 (SPPPVYH), and 308-315 (SPPPPKKH). Positions 292 to 311 (SPPPPVKHYSPPPVYHSPPP) are enriched in pro residues. The isodityrosine cross-linking stretch occupies residues 316–319 (YVYK). Repeat copies occupy residues 320–328 (SPPPPVKHY), 329–335 (SPPPVYH), and 336–343 (SPPPPKKH). Pro residues predominate over residues 320 to 339 (SPPPPVKHYSPPPVYHSPPP). The tract at residues 344-347 (YVYK) is isodityrosine cross-linking. 3 consecutive repeat copies span residues 348–356 (SPPPPVKHY), 357–363 (SPPPVYH), and 364–371 (SPPPPKKH). Residues 348–367 (SPPPPVKHYSPPPVYHSPPP) are compositionally biased toward pro residues. An isodityrosine cross-linking region spans residues 372–375 (YVYK). 2 repeat units span residues 376–384 (SPPPPVKHY) and 385–391 (SPPPVYH). Positions 376–395 (SPPPPVKHYSPPPVYHSPPP) are enriched in pro residues. Isodityrosine cross-linking regions lie at residues 400–403 (YVYK) and 420–423 (YLYK).

This sequence belongs to the extensin family. In terms of processing, the proline residues of the Ser-Pro(3) repeats are hydroxylated and then O-glycosylated (arabinosylation) by HPAT1, HPAT2 and HPAT3. Around 20% of Hyp units are in the nonglycosylated form. The Ser residues are O-galactosylated. The lack of Ser-O-galactosylation does not affect Hyp-O-arabinosylation, but both types of O-glycosylation are central for the functionality of the protein. Correct Hyp-O-arabinosylation appears to be responsible for generating a bend on the EXT3 backbone around a YVY motif, which may represent a better scenario for Tyr intramolecular cross-links (isodityrosine type). Post-translationally, synthetised as soluble proteins which become insolubilised in the cell wall through the intermolecular cross-linking of Tyr on adjacent monomers. Isodityrosine (IDT) stabilizes and makes rigid the part of the polypeptide where IDT functional sites are present. As to expression, predominantly expressed in the roots.

Its subcellular location is the secreted. It localises to the primary cell wall. Functionally, structural component which strengthens the primary cell wall. Forms dendritic structures indicating a propensity for self-assembly through tyrosine cross-linking. Forms intermolecular cross-links exclusively by pulcherosine (three Tyr). Scaffold formation requires an unobstructed C-terminus of EXT3. Required for the correct positioning of the cell plate during cytokinesis in cells of the developing embryo. Extensins contain a characteristic repeat of the pentapeptide Ser-Pro(4). For this particular extensin, a typical repeat of Ser-Pro(3) is found. This Arabidopsis thaliana (Mouse-ear cress) protein is Extensin-3.